A 349-amino-acid chain; its full sequence is Thiamine thiazole synthase, chloroplastic (349 aa).

The transit peptide at 1 to 45 directs the protein to the chloroplast; the sequence is MAAIASTLSLSSTKPQRLFDSSFHGSAISAAPISIGLKPRSFSVR. Substrate contacts are provided by residues A94, 114–115, G122, and A187; that span reads EQ. C216 bears the 2,3-didehydroalanine (Cys) mark. Substrate-binding positions include D218, H233, M285, and 295-297; that span reads RMG.

This sequence belongs to the THI4 family. Homooctamer. Interacts with RBCX1 and RBCX1. Interacts with CPK33. The cofactor is Fe cation. In terms of processing, during the catalytic reaction, a sulfide is transferred from Cys-216 to a reaction intermediate, generating a dehydroalanine residue. Not phosphorylated in vitro by CPK33. Expressed at high levels in chloroplast-containing parenchymatic cells of leaves, inflorescence shoots and flowers, and at lower levels in the vascular system. In young plants, detected in roots and shoots including cotyledons, leaves and hypocotyls. Also observed in apical meristematic regions, siliques and embryos. Low expression in roots, limited to the vascular tissue. Broadly expressed in roots, cotyledons, leaves, hypocotyls, inflorescences, siliques, and strongly in guard cells.

It localises to the plastid. The protein resides in the chloroplast. It is found in the mitochondrion. The protein localises to the cell membrane. The catalysed reaction is [ADP-thiazole synthase]-L-cysteine + glycine + NAD(+) = [ADP-thiazole synthase]-dehydroalanine + ADP-5-ethyl-4-methylthiazole-2-carboxylate + nicotinamide + 3 H2O + 2 H(+). Functionally, involved in biosynthesis of the thiamine precursor thiazole. Catalyzes the conversion of NAD and glycine to adenosine diphosphate 5-(2-hydroxyethyl)-4-methylthiazole-2-carboxylic acid (ADT), an adenylated thiazole intermediate. The reaction includes an iron-dependent sulfide transfer from a conserved cysteine residue of the protein to a thiazole intermediate. The enzyme can only undergo a single turnover, which suggests it is a suicide enzyme. May have additional roles in adaptation to various stress conditions and in DNA damage tolerance. Acts as a positive regulator for the abscisic acid-induced activation of slow type anion channels during stomatal closure by repressing CPK33 kinase activity. The sequence is that of Thiamine thiazole synthase, chloroplastic from Arabidopsis thaliana (Mouse-ear cress).